Consider the following 782-residue polypeptide: Probable cyclic di-GMP phosphodiesterase PdeI (782 aa).

The next 2 membrane-spanning stretches (helical) occupy residues 12–32 and 286–306; these read LIIL…IINY and LFYL…LMTT. The EAL domain occupies 527 to 781; it reads NIWIARNIRH…AWDKSGKLVK (255 aa).

Its subcellular location is the cell membrane. It catalyses the reaction 3',3'-c-di-GMP + H2O = 5'-phosphoguanylyl(3'-&gt;5')guanosine + H(+). Phosphodiesterase (PDE) that catalyzes the hydrolysis of cyclic-di-GMP (c-di-GMP) to 5'-pGpG. Overexpression reduces biofilm formation. Cyclic-di-GMP is a second messenger which controls cell surface-associated traits in bacteria. The sequence is that of Probable cyclic di-GMP phosphodiesterase PdeI from Escherichia coli (strain K12).